A 444-amino-acid chain; its full sequence is Squalene synthase ERG9 (444 aa).

The chain crosses the membrane as a helical span at residues 421–441; it reads FNMVLSIILSVLLGFYYIYTL.

The protein belongs to the phytoene/squalene synthase family. Mg(2+) is required as a cofactor.

It is found in the endoplasmic reticulum membrane. It localises to the microsome. The catalysed reaction is 2 (2E,6E)-farnesyl diphosphate + NADPH + H(+) = squalene + 2 diphosphate + NADP(+). The enzyme catalyses 2 (2E,6E)-farnesyl diphosphate + NADH + H(+) = squalene + 2 diphosphate + NAD(+). The protein operates within terpene metabolism; lanosterol biosynthesis; lanosterol from farnesyl diphosphate: step 1/3. Functionally, squalene synthase; part of the third module of ergosterol biosynthesis pathway that includes the late steps of the pathway. ERG9 produces squalene from 2 farnesyl pyrophosphate moieties. The third module or late pathway involves the ergosterol synthesis itself through consecutive reactions that mainly occur in the endoplasmic reticulum (ER) membrane. Firstly, the squalene synthase ERG9 catalyzes the condensation of 2 farnesyl pyrophosphate moieties to form squalene, which is the precursor of all steroids. Squalene synthase is crucial for balancing the incorporation of farnesyl diphosphate (FPP) into sterol and nonsterol isoprene synthesis. Secondly, the squalene epoxidase ERG1 catalyzes the stereospecific oxidation of squalene to (S)-2,3-epoxysqualene, which is considered to be a rate-limiting enzyme in steroid biosynthesis. Then, the lanosterol synthase ERG7 catalyzes the cyclization of (S)-2,3 oxidosqualene to lanosterol, a reaction that forms the sterol core. In the next steps, lanosterol is transformed to zymosterol through a complex process involving various demethylation, reduction and desaturation reactions. The lanosterol 14-alpha-demethylase ERG11 (also known as CYP51) catalyzes C14-demethylation of lanosterol to produce 4,4'-dimethyl cholesta-8,14,24-triene-3-beta-ol, which is critical for ergosterol biosynthesis. The C-14 reductase ERG24 reduces the C14=C15 double bond of 4,4-dimethyl-cholesta-8,14,24-trienol to produce 4,4-dimethyl-cholesta-8,24-dienol. 4,4-dimethyl-cholesta-8,24-dienol is substrate of the C-4 demethylation complex ERG25-ERG26-ERG27 in which ERG25 catalyzes the three-step monooxygenation required for the demethylation of 4,4-dimethyl and 4alpha-methylsterols, ERG26 catalyzes the oxidative decarboxylation that results in a reduction of the 3-beta-hydroxy group at the C-3 carbon to an oxo group, and ERG27 is responsible for the reduction of the keto group on the C-3. ERG28 has a role as a scaffold to help anchor ERG25, ERG26 and ERG27 to the endoplasmic reticulum and ERG29 regulates the activity of the iron-containing C4-methylsterol oxidase ERG25. Then, the sterol 24-C-methyltransferase ERG6 catalyzes the methyl transfer from S-adenosyl-methionine to the C-24 of zymosterol to form fecosterol. The C-8 sterol isomerase ERG2 catalyzes the reaction which results in unsaturation at C-7 in the B ring of sterols and thus converts fecosterol to episterol. The sterol-C5-desaturase ERG3 then catalyzes the introduction of a C-5 double bond in the B ring to produce 5-dehydroepisterol. The C-22 sterol desaturase ERG5 further converts 5-dehydroepisterol into ergosta-5,7,22,24(28)-tetraen-3beta-ol by forming the C-22(23) double bond in the sterol side chain. Finally, ergosta-5,7,22,24(28)-tetraen-3beta-ol is substrate of the C-24(28) sterol reductase ERG4 to produce ergosterol. In Saccharomyces cerevisiae (strain ATCC 204508 / S288c) (Baker's yeast), this protein is Squalene synthase ERG9.